The primary structure comprises 970 residues: Toxin subunit YenC2 (970 aa).

RHS repeat units lie at residues 168–182 (AGQCVSYYDAAGLIQ), 297–311 (GVVTTYTYEAETQRL), 329–343 (LQDLRYEYDPVGNVL), 361–375 (VPENAYRYDSLYQLV), 408–422 (NYTRTYTYDSAGNLM), 500–514 (DDSESYRYDGSSQRI), 580–594 (NDQIRWSYDNLTCSS), 606–620 (SMEEYYPYGGTAVWA), and 640–654 (DATGLYYYGFRYYQP). The segment at 610-690 (YYPYGGTAVW…PLRLTDPDGM (81 aa)) is RHS-repeat associated core domain. Residues 849–950 (TEAFITGIRS…YNCSGIISGL (102 aa)) are deaminase domain.

It belongs to the RHS family. In terms of assembly, semipurified toxin complex consists of at least YenA1-YenA2-YenB-YenC1-YenC2-Chi1-Chi2. YenB and the N-terminus of YenC2 form a large hollow shell of beta-strands. The shell is closed at both ends, within which the C-terminus of YenC2 is probably found. The C-terminal region dissociates from the YenB-YenC2 complex at pH 4.5 but not 7.5. The Yen-TC:K9 subcomplex is about 26 nm tall and 22 nm in diameter with 5-fold symmetry and 5 copies of YenA1, YenA2, Chi1 and Chi2; the chitinase subunits may be solvent accessible on the exterior the complex. The Yen-TC:K9 subcomplex has no insecticidal activity. The native complex with additional YenB, YenC1 and YenC2 subunits is 16 nm taller and is insecticidal; the toxicity-conferring subunits are present at about 1 copy each.

Its subcellular location is the secreted. Toxin complex is secreted when grown at 25 degrees Celsius or less; at higher temperatures the proteins are present intracellularly but not secreted. Its function is as follows. Part of an orally active toxin complex (TC) with strong insecticidal effects on larvae of the Coleoptera Costelytra zealandica, Acrossidius tasmania and Adoryphorus couloni and some Lepidoptera larvae. The TC has an endochitinase activity. The chain is Toxin subunit YenC2 from Yersinia entomophaga.